The following is a 175-amino-acid chain: Probable DNA-directed RNA polymerase subunit delta (175 aa).

An HTH HARE-type domain is found at 14–81; that stretch reads CSMIEVVHSV…GENRWGLRSW (68 aa). Residues 91–175 form a disordered region; it reads ILPQPKPKKK…DETEEEEEEL (85 aa). Acidic residues predominate over residues 106 to 175; the sequence is DGFDDYIEED…DETEEEEEEL (70 aa).

This sequence belongs to the RpoE family. In terms of assembly, RNAP is composed of a core of 2 alpha, a beta and a beta' subunits. The core is associated with a delta subunit and one of several sigma factors.

In terms of biological role, participates in both the initiation and recycling phases of transcription. In the presence of the delta subunit, RNAP displays an increased specificity of transcription, a decreased affinity for nucleic acids, and an increased efficiency of RNA synthesis because of enhanced recycling. The sequence is that of Probable DNA-directed RNA polymerase subunit delta from Bacillus anthracis.